A 645-amino-acid polypeptide reads, in one-letter code: Cytoplasmic dynein 1 intermediate chain 1 (645 aa).

Basic and acidic residues-rich tracts occupy residues 1–13 and 20–58; these read MSDK…ELER and QIRE…KRRE. Disordered stretches follow at residues 1–58 and 96–125; these read MSDK…KRRE and MSPS…RTLQ. Position 2 is an N-acetylserine (Ser-2). Positions 2–123 are interaction with DCTN1; the sequence is SDKSDLKAEL…SGDLGPLTRT (122 aa). Phosphoserine is present on residues Ser-50 and Ser-100. Residues 96–107 show a composition bias toward low complexity; sequence MSPSSKSVSTPS. Position 105 is a phosphothreonine (Thr-105). Phosphoserine is present on residues Ser-107, Ser-111, and Ser-114. Positions 147 to 163 are interaction with DYNLT1; that stretch reads KLGVSKVTQVDFLPREV. A disordered region spans residues 169–221; that stretch reads ETQTPLATHQSEEDEEDEEMVESKVGQDSELENQDKKQEVKEAPPRELTEEEK. Phosphothreonine is present on Thr-176. 2 positions are modified to phosphoserine: Ser-179 and Ser-197. Residues 189 to 221 are compositionally biased toward basic and acidic residues; that stretch reads VESKVGQDSELENQDKKQEVKEAPPRELTEEEK. WD repeat units lie at residues 285 to 334, 338 to 378, 387 to 428, 437 to 477, 482 to 527, 530 to 570, and 576 to 615; these read SKHR…TTPE, HCQS…RTPV, AHTH…TPQE, SKPV…AGIG, GHQG…PLYS, DNAD…EVPT, and EGAS…VPHN. Ser-635 carries the phosphoserine modification.

The protein belongs to the dynein intermediate chain family. In terms of assembly, homodimer. The cytoplasmic dynein 1 complex consists of two catalytic heavy chains (HCs) and a number of non-catalytic subunits presented by intermediate chains (ICs), light intermediate chains (LICs) and light chains (LCs); the composition seems to vary in respect to the IC, LIC and LC composition. The heavy chain homodimer serves as a scaffold for the probable homodimeric assembly of the respective non-catalytic subunits. The ICs and LICs bind directly to the HC dimer and the LCs assemble on the IC dimer. Interacts with DYNC1H1. Interacts with DYNLT1 and DYNLT3. Interacts with DCTN1. Interacts with MCRS1; the interaction is required for the proper distribution of centriolar satellites.

The protein localises to the cytoplasm. Its subcellular location is the chromosome. It is found in the centromere. The protein resides in the kinetochore. It localises to the cytoskeleton. The protein localises to the spindle pole. Its function is as follows. Acts as one of several non-catalytic accessory components of the cytoplasmic dynein 1 complex that are thought to be involved in linking dynein to cargos and to adapter proteins that regulate dynein function. Cytoplasmic dynein 1 acts as a motor for the intracellular retrograde motility of vesicles and organelles along microtubules. The intermediate chains mediate the binding of dynein to dynactin via its 150 kDa component (p150-glued) DCTN1. May play a role in mediating the interaction of cytoplasmic dynein with membranous organelles and kinetochores. In Homo sapiens (Human), this protein is Cytoplasmic dynein 1 intermediate chain 1 (DYNC1I1).